The primary structure comprises 370 residues: Type II restriction enzyme MjaII (370 aa).

Belongs to the TdeIII type II restriction endonuclease family.

It catalyses the reaction Endonucleolytic cleavage of DNA to give specific double-stranded fragments with terminal 5'-phosphates.. A P subtype restriction enzyme that recognizes the double-stranded sequence 5'-GGNCC-3'; the cleavage site is unknown. This chain is Type II restriction enzyme MjaII (mjaIIR), found in Methanocaldococcus jannaschii (strain ATCC 43067 / DSM 2661 / JAL-1 / JCM 10045 / NBRC 100440) (Methanococcus jannaschii).